Reading from the N-terminus, the 20-residue chain is Tetracycline resistance leader peptide (20 aa).

The tract at residues 1–20 (MKCNKMNRVQLKEGSVSMTL) is disordered.

This is Tetracycline resistance leader peptide (tetL) from Bacillus subtilis (strain 168).